The chain runs to 660 residues: Bifunctional polymyxin resistance protein ArnA (660 aa).

The formyltransferase ArnAFT stretch occupies residues 1–304 (MKAIVFAYHD…EMGIVTDVRL (304 aa)). H104 serves as the catalytic Proton donor; for formyltransferase activity. (6R)-10-formyltetrahydrofolate contacts are provided by residues R114 and 136 to 140 (VKRPD). Positions 314-660 (RRTRVLILGV…RTTVQEGDGA (347 aa)) are dehydrogenase ArnADH. NAD(+)-binding positions include D347 and 368–369 (DI). UDP-alpha-D-glucuronate is bound by residues A393, Y398, and 432 to 433 (TS). The active-site Proton acceptor; for decarboxylase activity is the E434. Residues R460, N492, 526–535 (KLMDGGAQKR), and Y613 contribute to the UDP-alpha-D-glucuronate site. The active-site Proton donor; for decarboxylase activity is R619.

This sequence in the N-terminal section; belongs to the Fmt family. UDP-L-Ara4N formyltransferase subfamily. The protein in the C-terminal section; belongs to the NAD(P)-dependent epimerase/dehydratase family. UDP-glucuronic acid decarboxylase subfamily. In terms of assembly, homohexamer, formed by a dimer of trimers.

It catalyses the reaction UDP-alpha-D-glucuronate + NAD(+) = UDP-beta-L-threo-pentopyranos-4-ulose + CO2 + NADH. It carries out the reaction UDP-4-amino-4-deoxy-beta-L-arabinose + (6R)-10-formyltetrahydrofolate = UDP-4-deoxy-4-formamido-beta-L-arabinose + (6S)-5,6,7,8-tetrahydrofolate + H(+). Its pathway is nucleotide-sugar biosynthesis; UDP-4-deoxy-4-formamido-beta-L-arabinose biosynthesis; UDP-4-deoxy-4-formamido-beta-L-arabinose from UDP-alpha-D-glucuronate: step 1/3. It functions in the pathway nucleotide-sugar biosynthesis; UDP-4-deoxy-4-formamido-beta-L-arabinose biosynthesis; UDP-4-deoxy-4-formamido-beta-L-arabinose from UDP-alpha-D-glucuronate: step 3/3. The protein operates within bacterial outer membrane biogenesis; lipopolysaccharide biosynthesis. Its function is as follows. Bifunctional enzyme that catalyzes the oxidative decarboxylation of UDP-glucuronic acid (UDP-GlcUA) to UDP-4-keto-arabinose (UDP-Ara4O) and the addition of a formyl group to UDP-4-amino-4-deoxy-L-arabinose (UDP-L-Ara4N) to form UDP-L-4-formamido-arabinose (UDP-L-Ara4FN). The modified arabinose is attached to lipid A and is required for resistance to polymyxin and cationic antimicrobial peptides. The chain is Bifunctional polymyxin resistance protein ArnA from Serratia proteamaculans (strain 568).